Here is a 128-residue protein sequence, read N- to C-terminus: Glyoxylase-like domain-containing protein (128 aa).

Residues 6-125 enclose the VOC domain; the sequence is QISGIEIPAT…EGNTHAICTR (120 aa).

The protein operates within mycotoxin biosynthesis. In terms of biological role, glyoxylase-like domain-containing protein; part of the gene cluster that mediates the biosynthesis of the selective antifungal agent ascochitine, an o-quinone methide that plays a possible protective role against other microbial competitors in nature and is considered to be important for pathogenicity of legume-associated Didymella species. The pathway probably begins with the synthesis of a keto-aldehyde intermediate by the ascochitine non-reducing polyketide synthase pksAC from successive condensations of 4 malonyl-CoA units, presumably with a simple acetyl-CoA starter unit. Release of the keto-aldehyde intermediate is consistent with the presence of the C-terminal reductive release domain. The HR-PKS (orf7) probably makes a diketide starter unit which is passed to the non-reducing polyketide synthase pksAC for further extension, producing ascochital and ascochitine. The aldehyde dehydrogenase (orf1), the 2-oxoglutarate-dependent dioxygenase (orf3) and the dehydrogenase (orf9) are probably involved in subsequent oxidations of methyl groups to the carboxylic acid of the heterocyclic ring. The ascochitine gene cluster also includes a gene encoding a short peptide with a cupin domain (orf2) that is often found in secondary metabolite gene clusters and which function has still to be determined. In Didymella fabae (Leaf and pod spot disease fungus), this protein is Glyoxylase-like domain-containing protein.